Reading from the N-terminus, the 33-residue chain is Photosystem II reaction center protein Psb30 (33 aa).

The helical transmembrane segment at leucine 5 to leucine 25 threads the bilayer.

It belongs to the Psb30/Ycf12 family. PSII is composed of 1 copy each of membrane proteins PsbA, PsbB, PsbC, PsbD, PsbE, PsbF, PsbH, PsbI, PsbJ, PsbK, PsbL, PsbM, PsbT, PsbY, PsbZ, Psb30/Ycf12, peripheral proteins of the oxygen-evolving complex and a large number of cofactors. It forms dimeric complexes.

The protein localises to the plastid. It localises to the chloroplast thylakoid membrane. A core subunit of photosystem II (PSII), probably helps stabilize the reaction center. This Euglena mutabilis protein is Photosystem II reaction center protein Psb30.